A 361-amino-acid polypeptide reads, in one-letter code: MKTTPFTEKHIALGAKMHEFAGYNMPIEYSGIIDEHLTVCNGVGVFDVSHMGEFWVKGPHALDFLQKVTSNNVAALVPGKIQYTCFPNEDGGIVDDLLVYQYEPEKYLLVVNASNIEKDWNWCISHNTEGAELENSSDNMAQLAVQGPKAIQALQKLTDINLADIPYYTFKVGEFAGEKNVIISNTGYTGAGGFELYFYPDAAMKIWDAVFEAGAEFGIKPIGLGARDTLRLEMGFCLYGNDLDDTTSPIEAGLGWITKFVDGKNFTNRSMLEKQKAEGTVRKLVGFEMIDRGIPRHGYELTTAEGDKIGVVTSGTMSPIRKIGIGMGYVKPEYSKIGTEICIDMRGRKLKAVVVKPPFRK.

This sequence belongs to the GcvT family. In terms of assembly, the glycine cleavage system is composed of four proteins: P, T, L and H.

It catalyses the reaction N(6)-[(R)-S(8)-aminomethyldihydrolipoyl]-L-lysyl-[protein] + (6S)-5,6,7,8-tetrahydrofolate = N(6)-[(R)-dihydrolipoyl]-L-lysyl-[protein] + (6R)-5,10-methylene-5,6,7,8-tetrahydrofolate + NH4(+). In terms of biological role, the glycine cleavage system catalyzes the degradation of glycine. In Bacteroides fragilis (strain ATCC 25285 / DSM 2151 / CCUG 4856 / JCM 11019 / LMG 10263 / NCTC 9343 / Onslow / VPI 2553 / EN-2), this protein is Aminomethyltransferase.